The primary structure comprises 87 residues: Small ribosomal subunit protein bS21 (87 aa).

Basic and acidic residues predominate over residues 35–52 (HYEKPSEKKAREKAEAVR). Residues 35–87 (HYEKPSEKKAREKAEAVRRARKLARKKLQREGLLPSKPKPAFGADRRPSAAAR) form a disordered region. Positions 53-62 (RARKLARKKL) are enriched in basic residues. Basic and acidic residues predominate over residues 78-87 (ADRRPSAAAR).

This is Small ribosomal subunit protein bS21 from Rhodopseudomonas palustris (strain ATCC BAA-98 / CGA009).